The chain runs to 208 residues: Small ribosomal subunit protein uS4 (208 aa).

The region spanning 95–157 is the S4 RNA-binding domain; that stretch reads RRIDNVVYRA…DSLKKLVRSN (63 aa).

This sequence belongs to the universal ribosomal protein uS4 family. As to quaternary structure, part of the 30S ribosomal subunit. Contacts protein S5. The interaction surface between S4 and S5 is involved in control of translational fidelity.

Functionally, one of the primary rRNA binding proteins, it binds directly to 16S rRNA where it nucleates assembly of the body of the 30S subunit. With S5 and S12 plays an important role in translational accuracy. This chain is Small ribosomal subunit protein uS4, found in Borrelia hermsii (strain HS1 / DAH).